Here is a 794-residue protein sequence, read N- to C-terminus: ATP-dependent RNA helicase SUPV3L1, mitochondrial (794 aa).

The transit peptide at 1–30 (MRRCAWPLLRLSSRVGLALRHGGAVRLRQA) directs the protein to the mitochondrion. In terms of domain architecture, Helicase ATP-binding spans 182–322 (EARAIQRKII…AIDLVTELMY (141 aa)). 195-202 (GPTNSGKT) is a binding site for ATP. A Helicase C-terminal domain is found at 341 to 506 (VLDYALESLD…GLHPTPEQIE (166 aa)). Disordered regions lie at residues 678–741 (EVMS…HGRG) and 764–794 (EWQD…KKKK). The segment covering 689–704 (TKRDARTVSDHRDAKS) has biased composition (basic and acidic residues).

The protein belongs to the helicase family. Mg(2+) is required as a cofactor. Mn(2+) serves as cofactor.

The protein resides in the nucleus. The protein localises to the mitochondrion matrix. Its subcellular location is the mitochondrion nucleoid. It catalyses the reaction ATP + H2O = ADP + phosphate + H(+). Its function is as follows. Major helicase player in mitochondrial RNA metabolism. Component of the mitochondrial degradosome (mtEXO) complex, that degrades 3' overhang double-stranded RNA with a 3'-to-5' directionality in an ATP-dependent manner. ATPase and ATP-dependent multisubstrate helicase, able to unwind double-stranded (ds) DNA and RNA, and RNA/DNA heteroduplexes in the 5'-to-3' direction. Plays a role in the RNA surveillance system in mitochondria; regulates the stability of mature mRNAs, the removal of aberrantly formed mRNAs and the rapid degradation of non coding processing intermediates. Also implicated in recombination and chromatin maintenance pathways. May protect cells from apoptosis. Associates with mitochondrial DNA. The polypeptide is ATP-dependent RNA helicase SUPV3L1, mitochondrial (SUPV3L1) (Gallus gallus (Chicken)).